We begin with the raw amino-acid sequence, 92 residues long: Small ribosomal subunit protein uS19 (92 aa).

The disordered stretch occupies residues E73–K92. The span at F80–K92 shows a compositional bias: basic residues.

It belongs to the universal ribosomal protein uS19 family.

Functionally, protein S19 forms a complex with S13 that binds strongly to the 16S ribosomal RNA. In Christiangramia forsetii (strain DSM 17595 / CGMCC 1.15422 / KT0803) (Gramella forsetii), this protein is Small ribosomal subunit protein uS19.